The sequence spans 2641 residues: MGIKLRRLTAGICLITQLVFPMAAAAQGVVNAATQQPVPAQIAIANANTVPYTLGALESAQSVAERFGISVAELRKLNQFRTFARGFDNVRQGDELDVPAQVSENNLTPPPGNSSGNLEQQIASTSQQIGSLLAEDMNSEQAANMARGWASSQASGAMTDWLSRFGTARITLGVDEDFSLKNSQFDFLHPWYETPDNLFFSQHTLHRTDERTQINNGLGWRHFTPTWMSGINFFFDHDLSRYHSRAGIGAEYWRDYLKLSSNGYLRLTNWRSAPELDNDYEARPANGWDVRAEGWLPAWPHLGGKLVYEQYYGDEVALFDKDDRQSNPHAITAGLNYTPFPLMTFSAEQRQGKQGENDTRFAVDFTWQPGSAMQKQLDPNEVDARRSLAGSRFDLVDRNNNIVLEYRKKELVRLTLTDPVTGKSGEVKSLVSSLQTKYALKGYNVEATALEAAGGKVVTTGKDILVTLPAYRFTSTPETDNTWPIEVTAEDVKGNFSNREQSMVVVQAPTLSQKDSSVSLSSQTLSADSHSTATLTFIAHDAAGNPVIGLVLSTRHEGVQDITLSDWKDNGDGSYTQILTTGAMSGTLTLMPQLNGVDAAKAPAVVNIISVSSSRTHSSIKIDKDRYLSGNPIEVTVELRDENDKPVKEQKQQLNTAVSIDNVKPGVTTDWKETADGVYKATYTAYTKGSGLTAKLLMQNWNEDLHTAGFIIDANPQSAKIATLSASNNGVLANENAANTVSVNVADEGSNPINDHTVTFAVLSGSATSFNNQNTAKTDVNGLATFDLKSSKQEDNTVEVTLENGVKQTLIVSFVGDSSTAQVDLQKSKNEVVADGNDSATMTATVRDAKGNLLNDVKVTFNVNSAAAKLSQTEVNSHDGIATATLTSLKNGDYTVTASVSSGSQANQQVIFIGDQSTAALTLSVPSGDITVTNTAPLHMTATLQDKNGNPLKDKEITFSVPNDVASRFSISNSGKGMTDSNGTAIASLTGTLAGTHMITARLANSNVSDTQPMTFVADKDRAVVVLQTSKAEIIGNGVDETTLTATVKDPFDNVVKNLSVVFRTSPADTQLSLNARNTNENGIAEVTLKGTVLGVHTAEAILLNGNRDTKIVNIAPDASNAQVTLNIPAQQVVTNNSDSVQLTATVKDPSNHPVAGITVNFTMPQDVAANFTLENNGIAITQANGEAHVTLKGKKAGTHTVTATLGNNNASDAQPVTFVADKDSAVVVLQTSKAEIIGNGVDETTLTATVKDPFDNAVKDLQVTFSTNPADTQLSQSKSNTNDSGVAEVTFKGTVLGVHTAEATLPNGNNDTKIVNIAPDASNAQVTLNIPAQQVVTNNSDSVQLTATVKDPSNHPVAGITVNFTMPQDVAANFTLENNGIAITQANGEAHVTLKGKKAGTHTVTATLSNNNTSDSQPVTFVADKTSALVVLQISKNEITGNGVDSATLTATVKDQFDNEVNNLPVTFSTASSGLTLTPGESNTNESGIAQATLAGVAFGEQTVTASLANNGASDNKTVHFIGDTAAAKIIELTPVPDSIIAGTPQNSSGSVITATVVDNNGFPVKGVTVNFTSNAATAEMTNGGQAVTNEQGKATVTYTNTRSSIESGARPDTVEASLENGSSTLSTSINVNADASTAHLTLLQALFDTVSAGDTTNLYIEVKDNYGNGVPQQEVTLSVSPSEGVTPSNNAIYTTNHDGNFYASFTATKAGVYQVTATLENGDSMQQTVTYVPNVANAEISLAASKDPVIANNNDLTTLTATVADTEGNAIANSEVTFTLPEDVRANFTLGDGGKVVTDTEGKAKVTLKGTKAGAHTVTASMAGGKSEQLVVNFIADTLTAQVNLNVTEDNFIANNVGMTRLQATVTDGNGNPLANEAVTFTLPADVSASFTLGQGGSAITDINGKAEVTLSGTKSGTYPVTVSVNNYGVSDTKQVTLIADAGTAKLASLTSVYSFVVSTTEGATMTASVTDANGNPVEGIKVNFRGTSVTLSSTSVETDDRGFAEILVTSTEVGLKTVSASLADKPTEVISRLLNAKADINSATITSLEIPEGQVMVAQDVAVKAHVNDQFGNPILNESVTFSAEPPEHMTISQNIVSTDTHGIAEVTMTPERNGSYMVKASLANGSSYEKDLVVIDQKLTLSASSPLIGVNSPTGATLTATLTSANGTPVEGQVINFSVTPEGATLSGGKVRTNSSGQAPVVLTSNKVGTYTVTASFHNGVTIQTQTIVKVTGNSSTAHVASFIADPSTIAATNSDLSTLKATVEDGSGNLIEGLTVYFALKSGSATLTSLTAVTDQNGIATTSVRGAITGSVTVSAVTTAGGMQTVDITLVAGPADASQSVLKNNRSSLKGDFTDSAELHLVLHDISGNPIKVSEGLEFVQSGTNAPYVQVSAIDYSKNFSGEYKATVTGGGEGIATLIPVLNGVHQAGLSTTIQFTRAEDKIMSGTVLVNGANLPTTTFPSQGFTGAYYQLNNDNFAPGKTAADYEFSSSASWVDVDATGKVTFKNVGSKWERITATPKTGGPSYIYEIRVKSWWVNAGDAFMIYSLAENFCSSNGYTLPLGDHLNHSRSRGIGSLYSEWGDMGHYTTEAGFHSNMYWSSSPANSNEQYVVSLATGDQSVFEKLGFAYATCYKNL.

Positions 1-25 (MGIKLRRLTAGICLITQLVFPMAAA) are cleaved as a signal peptide. Positions 50-98 (VPYTLGALESAQSVAERFGISVAELRKLNQFRTFARGFDNVRQGDELDV) constitute a LysM domain. The segment at 125-400 (TSQQIGSLLA…SRFDLVDRNN (276 aa)) is inverse autotransporter. An invasin 3 domain region spans residues 513–605 (QKDSSVSLSS…GVDAAKAPAV (93 aa)). Big-1 domains are found at residues 617–711 (HSSI…AGFI), 721–815 (IATL…VSFV), 822–913 (QVDL…VIFI), 920–1017 (ALTL…MTFV), 1024–1116 (VVVL…VNIA), 1123–1220 (QVTL…VTFV), 1227–1319 (VVVL…VNIA), 1326–1423 (QVTL…VTFV), 1430–1523 (LVVL…VHFI), 1531–1633 (IIEL…SINV), 1641–1734 (HLTL…VTYV), 1741–1837 (EISL…VNFI), 1844–1941 (QVNL…VTLI), 1948–2032 (KLAS…PTEV), 2048–2141 (ITSL…VIDQ), 2142–2235 (KLTL…IVKV), and 2244–2336 (VASF…ITLV). The tract at residues 2538–2641 (KSWWVNAGDA…FAYATCYKNL (104 aa)) is C-type lectin domain.

This sequence belongs to the intimin/invasin family.

It localises to the cell outer membrane. A probable inverse autotransporter, it may be involved in biofilm formation and cell adhesion. May bind peptidoglycan via its LysM domain. The chain is Inverse autotransporter adhesin YeeJ (yeeJ) from Escherichia coli O157:H7.